A 373-amino-acid polypeptide reads, in one-letter code: 3-isopropylmalate dehydrogenase (373 aa).

Residue 82–93 (GPKWGTGAVRPE) participates in NAD(+) binding. The substrate site is built by Arg100, Arg110, Arg139, and Asp231. Mg(2+) is bound by residues Asp231 and Asp260. Residue 295–306 (GSAPDLPENKVN) participates in NAD(+) binding.

This sequence belongs to the isocitrate and isopropylmalate dehydrogenases family. Homodimer. It depends on Mg(2+) as a cofactor. Mn(2+) serves as cofactor.

The protein resides in the cytoplasm. The enzyme catalyses (2R,3S)-3-isopropylmalate + NAD(+) = 4-methyl-2-oxopentanoate + CO2 + NADH. It participates in amino-acid biosynthesis; L-leucine biosynthesis; L-leucine from 3-methyl-2-oxobutanoate: step 3/4. In terms of biological role, catalyzes the oxidation of 3-carboxy-2-hydroxy-4-methylpentanoate (3-isopropylmalate) to 3-carboxy-4-methyl-2-oxopentanoate. The product decarboxylates to 4-methyl-2 oxopentanoate. In Scheffersomyces stipitis (strain ATCC 58785 / CBS 6054 / NBRC 10063 / NRRL Y-11545) (Yeast), this protein is 3-isopropylmalate dehydrogenase (LEU2).